The sequence spans 507 residues: ATP synthase subunit alpha (507 aa).

170 to 177 (GDRKTGKT) serves as a coordination point for ATP.

It belongs to the ATPase alpha/beta chains family. F-type ATPases have 2 components, CF(1) - the catalytic core - and CF(0) - the membrane proton channel. CF(1) has five subunits: alpha(3), beta(3), gamma(1), delta(1), epsilon(1). CF(0) has three main subunits: a(1), b(2) and c(9-12). The alpha and beta chains form an alternating ring which encloses part of the gamma chain. CF(1) is attached to CF(0) by a central stalk formed by the gamma and epsilon chains, while a peripheral stalk is formed by the delta and b chains.

It is found in the cell inner membrane. It carries out the reaction ATP + H2O + 4 H(+)(in) = ADP + phosphate + 5 H(+)(out). Produces ATP from ADP in the presence of a proton gradient across the membrane. The alpha chain is a regulatory subunit. The sequence is that of ATP synthase subunit alpha from Anaplasma marginale (strain Florida).